The primary structure comprises 665 residues: Dystrophia myotonica WD repeat-containing protein (665 aa).

Gly residues predominate over residues 1 to 11 (MAAGGAEGGPG). 2 disordered regions span residues 1–91 (MAAG…PALP) and 100–119 (LGDP…LGAG). A2 bears the N-acetylalanine mark. Over residues 52-64 (PAPPQPTQPPPGP) the composition is skewed to pro residues. Low complexity predominate over residues 65-76 (AAASGPGAAGPA). The segment covering 77 to 89 (SSPPPAGPGPGPA) has biased composition (pro residues). WD repeat units lie at residues 208 to 248 (IDKT…TSTP), 279 to 318 (VGEG…LRGL), 321 to 360 (SYFG…VVAR), and 363 to 445 (GHKS…LSPH). Disordered regions lie at residues 380 to 413 (AEEA…VSPL), 446 to 506 (PSLA…SMEP), 524 to 564 (RDRG…RSRL), and 628 to 665 (DEET…GTVV). The segment covering 450-491 (RTRTLPGTPGATPPASGSSRAGETGAGPLPRSLSRSNSLPHP) has biased composition (low complexity). At S487 the chain carries Phosphoserine. R543 is modified (omega-N-methylarginine). The stretch at 592–629 (IAQERLTVLLFLEDCIITACQEGLICTWARPGKAFTDE) is one WD 5 repeat. Positions 634–646 (QAGQASWPRSPSK) are enriched in polar residues. A compositionally biased stretch (low complexity) spans 653 to 665 (SSQPGSSPSGTVV).

As to quaternary structure, component of the USP12/DMWD/WDR48 deubiquitinating complex. Interacts with USP12; promotes its enzymatic activity. Interacts with USP46. Widely expressed in brain where it localizes to the olfactory bulb, forebrain, thalamus, hippocampus, cerebellum, cortex and hypothalamus (at protein level). Expression seems to be particularly strong in areas of high synaptic density such as the glomerular layer of the olfactory bulb, and mossy fiber terminal fields of the hippocampus (at protein level). Expressed in retina, with strongest expression in the external and internal plexiform layers (at protein level). Strongly expressed in brain and testis. Also detected at lower levels in heart, kidney, liver, lung, ovary, uterus, bladder and skeletal muscle. In testis, expression seems to be restricted to secondary spermatocytes.

The protein localises to the cytoplasm. It localises to the nucleus. It is found in the perikaryon. The protein resides in the cell projection. Its subcellular location is the dendrite. Its function is as follows. Regulator of the deubiquitinating USP12/DMWD/WDR48 complex. Functions as a cofactor that promotes USP12 enzymatic activity. This is Dystrophia myotonica WD repeat-containing protein (Dmwd) from Mus musculus (Mouse).